The sequence spans 417 residues: Tyrosine--tRNA ligase (417 aa).

Tyrosine 34 serves as a coordination point for L-tyrosine. A 'HIGH' region motif is present at residues 39-48 (PTGDSMHIGH). Tyrosine 165 and glutamine 169 together coordinate L-tyrosine. Positions 227–231 (KFGKS) match the 'KMSKS' region motif. Lysine 230 contributes to the ATP binding site. The S4 RNA-binding domain maps to 349–417 (ENIVLWLVDT…KKKYFLARVK (69 aa)).

Belongs to the class-I aminoacyl-tRNA synthetase family. TyrS type 1 subfamily. As to quaternary structure, homodimer.

It is found in the cytoplasm. The catalysed reaction is tRNA(Tyr) + L-tyrosine + ATP = L-tyrosyl-tRNA(Tyr) + AMP + diphosphate + H(+). Catalyzes the attachment of tyrosine to tRNA(Tyr) in a two-step reaction: tyrosine is first activated by ATP to form Tyr-AMP and then transferred to the acceptor end of tRNA(Tyr). The chain is Tyrosine--tRNA ligase from Pediococcus pentosaceus (strain ATCC 25745 / CCUG 21536 / LMG 10740 / 183-1w).